Reading from the N-terminus, the 156-residue chain is Small ribosomal subunit protein uS7 (156 aa).

This sequence belongs to the universal ribosomal protein uS7 family. Part of the 30S ribosomal subunit. Contacts proteins S9 and S11.

One of the primary rRNA binding proteins, it binds directly to 16S rRNA where it nucleates assembly of the head domain of the 30S subunit. Is located at the subunit interface close to the decoding center, probably blocks exit of the E-site tRNA. In Aster yellows witches'-broom phytoplasma (strain AYWB), this protein is Small ribosomal subunit protein uS7.